Reading from the N-terminus, the 538-residue chain is Cytochrome P450 monooxygenase verH (538 aa).

The chain crosses the membrane as a helical span at residues 2–21; sequence VFAMLVVCWSIFLGLWMLVS. A heme-binding site is contributed by cysteine 445.

Belongs to the cytochrome P450 family. Heme serves as cofactor.

It localises to the membrane. It functions in the pathway secondary metabolite biosynthesis; terpenoid biosynthesis. The protein operates within mycotoxin biosynthesis. Functionally, cytochrome P450 monooxygenase; part of the gene cluster that mediates the biosynthesis of the neurotoxin verrucosidin, a methylated alpha-pyrone polyketide that inhibits oxidative phosphorylation in mitochondria and thereby causes neurological diseases. The carbon backbone of verrucosidin is synthesized by the HR-PKS verA, and further modified by the other verrucodidin cluster enzymes. The chain is Cytochrome P450 monooxygenase verH from Penicillium polonicum.